Here is a 134-residue protein sequence, read N- to C-terminus: Small ribosomal subunit protein uS8c (134 aa).

The protein belongs to the universal ribosomal protein uS8 family. In terms of assembly, part of the 30S ribosomal subunit.

It localises to the plastid. It is found in the chloroplast. Functionally, one of the primary rRNA binding proteins, it binds directly to 16S rRNA central domain where it helps coordinate assembly of the platform of the 30S subunit. The protein is Small ribosomal subunit protein uS8c (rps8) of Nicotiana tabacum (Common tobacco).